We begin with the raw amino-acid sequence, 452 residues long: Poly(A) polymerase I (452 aa).

Catalysis depends on residues Asp-68, Asp-70, and Asp-150. The interval 427–452 is disordered; it reads EQQRLHPKPKKKYYRPRRRKTTCSAE. The span at 431–452 shows a compositional bias: basic residues; sequence LHPKPKKKYYRPRRRKTTCSAE.

It belongs to the tRNA nucleotidyltransferase/poly(A) polymerase family.

It catalyses the reaction RNA(n) + ATP = RNA(n)-3'-adenine ribonucleotide + diphosphate. Adds poly(A) tail to the 3' end of many RNAs, which usually targets these RNAs for decay. Plays a significant role in the global control of gene expression, through influencing the rate of transcript degradation, and in the general RNA quality control. In Haemophilus influenzae (strain ATCC 51907 / DSM 11121 / KW20 / Rd), this protein is Poly(A) polymerase I.